Here is a 265-residue protein sequence, read N- to C-terminus: Chanoclavine-I dehydrogenase easD (265 aa).

Positions Met-1–Ala-20 are cleaved as a signal peptide. Positions 18, 66, 132, 169, 173, and 205 each coordinate NADP(+). Tyr-169 serves as the catalytic Proton donor. Lys-173 functions as the Lowers pKa of active site Tyr in the catalytic mechanism.

The protein belongs to the short-chain dehydrogenases/reductases (SDR) family. In terms of assembly, homotetramer.

It catalyses the reaction chanoclavine-I + NAD(+) = chanoclavine-I aldehyde + NADH + H(+). It participates in alkaloid biosynthesis; ergot alkaloid biosynthesis. Functionally, chanoclavine-I dehydrogenase; part of the gene cluster that mediates the biosynthesis of fungal ergot alkaloid. DmaW catalyzes the first step of ergot alkaloid biosynthesis by condensing dimethylallyl diphosphate (DMAP) and tryptophan to form 4-dimethylallyl-L-tryptophan. The second step is catalyzed by the methyltransferase easF that methylates 4-dimethylallyl-L-tryptophan in the presence of S-adenosyl-L-methionine, resulting in the formation of 4-dimethylallyl-L-abrine. The catalase easC and the FAD-dependent oxidoreductase easE then transform 4-dimethylallyl-L-abrine to chanoclavine-I which is further oxidized by easD in the presence of NAD(+), resulting in the formation of chanoclavine-I aldehyde. Chanoclavine-I aldehyde is the precursor of ergoamides and ergopeptines in Clavicipitaceae, and clavine-type alcaloids such as fumiclavine in Trichocomaceae. However, the metabolites downstream of chanoclavine-I aldehyde in Arthrodermataceae have not been identified yet. This is Chanoclavine-I dehydrogenase easD from Trichophyton verrucosum (strain HKI 0517).